Reading from the N-terminus, the 65-residue chain is MSTDSLPRSLMEQKAMELQQQLQALLDEIDQNKQESENISRESEYLCQYIGSMMAFQNRQTVPKK.

Residues 8-44 (RSLMEQKAMELQQQLQALLDEIDQNKQESENISRESE) are a coiled coil.

Belongs to the SLO1 family.

The sequence is that of SCOCO-like protein 1 from Schizosaccharomyces pombe (strain 972 / ATCC 24843) (Fission yeast).